A 431-amino-acid polypeptide reads, in one-letter code: Glutamate-1-semialdehyde 2,1-aminomutase (431 aa).

Residue K269 is modified to N6-(pyridoxal phosphate)lysine.

This sequence belongs to the class-III pyridoxal-phosphate-dependent aminotransferase family. HemL subfamily. In terms of assembly, homodimer. Pyridoxal 5'-phosphate serves as cofactor.

It is found in the cytoplasm. It carries out the reaction (S)-4-amino-5-oxopentanoate = 5-aminolevulinate. It participates in porphyrin-containing compound metabolism; protoporphyrin-IX biosynthesis; 5-aminolevulinate from L-glutamyl-tRNA(Glu): step 2/2. Its pathway is porphyrin-containing compound metabolism; chlorophyll biosynthesis. The chain is Glutamate-1-semialdehyde 2,1-aminomutase from Chlorobium limicola (strain DSM 245 / NBRC 103803 / 6330).